Reading from the N-terminus, the 707-residue chain is DCC-interacting protein 13-alpha (707 aa).

Residues Met-1–Gly-428 are required for RAB5A binding. Residues Gly-3–Pro-268 form the BAR domain. The stretch at Gln-234–Ala-257 forms a coiled coil. A PH domain is found at Leu-277 to Lys-375. Disordered regions lie at residues Ala-397–Glu-433, Gly-466–Ser-490, and Glu-636–Ala-707. Thr-399 bears the Phosphothreonine mark. At Ser-401 the chain carries Phosphoserine. Positions Ser-403 to Gly-414 match the F&amp;H motif. Ser-410 carries the phosphoserine; by PKA modification. Residues Ser-495–Gln-655 enclose the PID domain. Residues Leu-620–Ala-670 adopt a coiled-coil conformation. Basic and acidic residues predominate over residues Glu-636–Ser-666. Positions Gly-679–Ser-691 are enriched in low complexity. Residues Ser-691 and Ser-694 each carry the phosphoserine modification. Residues Glu-698–Ala-707 show a composition bias toward basic and acidic residues.

As to quaternary structure, homodimer. Binds RAB5A/Rab5 through an N-terminal domain. This interaction is essential for its recruitment to endosomal membranes as well as its role in cell proliferation. Binds DCC and the catalytic domain of the inactive form of AKT2 through its PID domain. Binds PIK3CA and subunits of the NuRD/MeCP1 complex. Interacts with OCRL and INPP5B. Interacts with NTRK2. Interacts with APPL2; interaction is independent of follicle stimulating hormone stimulation; interaction is decreased by adiponectin in a time-dependent manner. Forms a complex with APPL2 and RUVBL2. Forms a complex comprising APPL2, RUVBL2, CTNNB1, HDAC1 and HDAC2; interaction reduces interaction between CTNNB1, HDAC1, HDAC2 and RUVBL2 leading to the decrease of deacetylase activity of this complex; affects the recruitment of repressive complexes to the Wnt target genes. Interacts with ANXA2. Interacts with TGFBR1; interaction is TGF beta dependent; mediates trafficking of the TGFBR1 from the endosomes to the nucleus via microtubules in a TRAF6-dependent manner. Interacts with PRKCZ. Interacts with PIK3R1 and APPL2. Interacts with ADIPOR1; ADIPOQ enhances this interaction; inhibites adiponectin-stimulated binding of APPL2 to ADIPOR1. Phosphorylation at Ser-410 by PKA severely impairs binding to OCRL. Expressed in insulin-target tissues including skeletal muscle, liver, fat, and brain.

The protein resides in the early endosome membrane. It is found in the nucleus. Its subcellular location is the cytoplasm. It localises to the endosome. The protein localises to the cell projection. The protein resides in the ruffle. It is found in the cytoplasmic vesicle. Its subcellular location is the phagosome. Its function is as follows. Multifunctional adapter protein that binds to various membrane receptors, nuclear factors and signaling proteins to regulate many processes, such as cell proliferation, immune response, endosomal trafficking and cell metabolism. Regulates signaling pathway leading to cell proliferation through interaction with RAB5A and subunits of the NuRD/MeCP1 complex. Functions as a positive regulator of innate immune response via activation of AKT1 signaling pathway by forming a complex with APPL1 and PIK3R1. Inhibits Fc-gamma receptor-mediated phagocytosis through PI3K/Akt signaling in macrophages. Regulates TLR4 signaling in activated macrophages. Involved in trafficking of the TGFBR1 from the endosomes to the nucleus via microtubules in a TRAF6-dependent manner. Plays a role in cell metabolism by regulating adiponecting and insulin signaling pathways. Required for fibroblast migration through HGF cell signaling. Positive regulator of beta-catenin/TCF-dependent transcription through direct interaction with RUVBL2/reptin resulting in the relief of RUVBL2-mediated repression of beta-catenin/TCF target genes by modulating the interactions within the beta-catenin-reptin-HDAC complex. The protein is DCC-interacting protein 13-alpha of Mus musculus (Mouse).